The primary structure comprises 114 residues: Large ribosomal subunit protein uL22 (114 aa).

This sequence belongs to the universal ribosomal protein uL22 family. Part of the 50S ribosomal subunit.

In terms of biological role, this protein binds specifically to 23S rRNA; its binding is stimulated by other ribosomal proteins, e.g. L4, L17, and L20. It is important during the early stages of 50S assembly. It makes multiple contacts with different domains of the 23S rRNA in the assembled 50S subunit and ribosome. Functionally, the globular domain of the protein is located near the polypeptide exit tunnel on the outside of the subunit, while an extended beta-hairpin is found that lines the wall of the exit tunnel in the center of the 70S ribosome. The protein is Large ribosomal subunit protein uL22 of Streptococcus uberis (strain ATCC BAA-854 / 0140J).